The following is a 1121-amino-acid chain: Peroxisomal ATPase PEX1 (1121 aa).

Disordered stretches follow at residues 187–221 (SISSVRSDSSGHRIRRVRSSTSTATGRRSVTNNGE) and 1099–1121 (SGRDGNMPDGTASNEIGARSTLM). Over residues 205–217 (SSTSTATGRRSVT) the composition is skewed to low complexity.

This sequence belongs to the AAA ATPase family. In terms of assembly, interacts with PEX6; forming the PEX1-PEX6 AAA ATPase complex, which is composed of a heterohexamer formed by a trimer of PEX1-PEX6 dimers.

It localises to the membrane. It carries out the reaction ATP + H2O = ADP + phosphate + H(+). Component of the PEX1-PEX6 AAA ATPase complex involved in peroxisome biosynthesis. The complex acts as a protein dislocase complex that mediates the ATP-dependent extraction of the PEX5 receptor from peroxisomal membranes, an essential step for PEX5 recycling. Specifically recognizes PEX5 monoubiquitinated at 'Cys-6', and pulls it out of the peroxisome lumen through the PEX2-PEX10-PEX12 retrotranslocation channel. Extraction by the PEX1-PEX6 AAA ATPase complex is accompanied by unfolding of the TPR repeats and release of bound cargo from PEX5. The sequence is that of Peroxisomal ATPase PEX1 from Komagataella phaffii (strain GS115 / ATCC 20864) (Yeast).